Here is a 192-residue protein sequence, read N- to C-terminus: Pyruvate synthase subunit PorC (192 aa).

Heterotetramer of one alpha, one beta, one delta and one gamma chain.

The catalysed reaction is 2 oxidized [2Fe-2S]-[ferredoxin] + pyruvate + CoA = 2 reduced [2Fe-2S]-[ferredoxin] + acetyl-CoA + CO2 + H(+). In Thermotoga maritima (strain ATCC 43589 / DSM 3109 / JCM 10099 / NBRC 100826 / MSB8), this protein is Pyruvate synthase subunit PorC (porC).